The primary structure comprises 386 residues: Succinate--CoA ligase [ADP-forming] subunit beta (386 aa).

In terms of domain architecture, ATP-grasp spans 9 to 244; it reads KEILRSYGVS…LDEEDPKEVE (236 aa). ATP-binding positions include Lys46, 53–55, Glu99, Cys102, and Glu107; that span reads GRG. Mg(2+) contacts are provided by Asn199 and Asp213. Residues Asn264 and 321–323 each bind substrate; that span reads GIM.

Belongs to the succinate/malate CoA ligase beta subunit family. As to quaternary structure, heterotetramer of two alpha and two beta subunits. Mg(2+) is required as a cofactor.

It carries out the reaction succinate + ATP + CoA = succinyl-CoA + ADP + phosphate. The enzyme catalyses GTP + succinate + CoA = succinyl-CoA + GDP + phosphate. It functions in the pathway carbohydrate metabolism; tricarboxylic acid cycle; succinate from succinyl-CoA (ligase route): step 1/1. In terms of biological role, succinyl-CoA synthetase functions in the citric acid cycle (TCA), coupling the hydrolysis of succinyl-CoA to the synthesis of either ATP or GTP and thus represents the only step of substrate-level phosphorylation in the TCA. The beta subunit provides nucleotide specificity of the enzyme and binds the substrate succinate, while the binding sites for coenzyme A and phosphate are found in the alpha subunit. This Geobacillus kaustophilus (strain HTA426) protein is Succinate--CoA ligase [ADP-forming] subunit beta.